The following is a 217-amino-acid chain: Somatotropin (217 aa).

The first 26 residues, 1 to 26 (MMAAGPRTSLLLAFALLCLPWTQVVG), serve as a signal peptide directing secretion. H46 is a binding site for Zn(2+). A disulfide bridge connects residues C79 and C190. S132 is modified (phosphoserine). E199 lines the Zn(2+) pocket. C207 and C215 form a disulfide bridge.

This sequence belongs to the somatotropin/prolactin family.

It localises to the secreted. Its function is as follows. Plays an important role in growth control. Its major role in stimulating body growth is to stimulate the liver and other tissues to secrete IGF1. It stimulates both the differentiation and proliferation of myoblasts. It also stimulates amino acid uptake and protein synthesis in muscle and other tissues. The protein is Somatotropin (GH1) of Bos taurus (Bovine).